A 96-amino-acid chain; its full sequence is Cytochrome oxidase assembly factor 4 (96 aa).

A CHCH domain is found at 36-77 (KTGCYVENLALQLCHAETGDWRQCFNEMALFRKCWEKNGNRE). 2 consecutive short sequence motifs (cx9C motif) follow at residues 39–49 (CYVENLALQLC) and 59–69 (CFNEMALFRKC). 2 disulfides stabilise this stretch: C39–C69 and C49–C59.

This sequence belongs to the COA4 family.

The protein localises to the mitochondrion inner membrane. Its subcellular location is the mitochondrion intermembrane space. In terms of biological role, involved in cytochrome c oxidase assembly or stability. This chain is Cytochrome oxidase assembly factor 4 (COA4), found in Saccharomyces cerevisiae (strain ATCC 204508 / S288c) (Baker's yeast).